The primary structure comprises 447 residues: Hydroxymethylglutaryl-CoA synthase (447 aa).

E86 acts as the Proton donor/acceptor in catalysis. C118 serves as the catalytic Acyl-thioester intermediate. Residues C118, N156, T160, S210, H250, K259, N327, and S361 each coordinate (3S)-3-hydroxy-3-methylglutaryl-CoA. The active-site Proton donor/acceptor is H250. Phosphothreonine is present on T398.

The protein belongs to the thiolase-like superfamily. HMG-CoA synthase family.

The catalysed reaction is acetoacetyl-CoA + acetyl-CoA + H2O = (3S)-3-hydroxy-3-methylglutaryl-CoA + CoA + H(+). It participates in metabolic intermediate biosynthesis; (R)-mevalonate biosynthesis; (R)-mevalonate from acetyl-CoA: step 2/3. Functionally, hydroxymethylglutaryl-CoA synthase; part of the first module of ergosterol biosynthesis pathway that includes the early steps of the pathway, conserved across all eukaryotes, and which results in the formation of mevalonate from acetyl-coenzyme A (acetyl-CoA). Hcs1 condenses acetyl-CoA with acetoacetyl-CoA to form hydroxymethylglutaryl-CoA (HMG-CoA). The first module starts with the action of the cytosolic acetyl-CoA acetyltransferase eg10 that catalyzes the formation of acetoacetyl-CoA. The hydroxymethylglutaryl-CoA synthases erg13 then condenses acetyl-CoA with acetoacetyl-CoA to form HMG-CoA. The rate-limiting step of the early module is the reduction to mevalonate by the 3-hydroxy-3-methylglutaryl-coenzyme A (HMG-CoA) reductases hcs1. This Schizosaccharomyces pombe (strain 972 / ATCC 24843) (Fission yeast) protein is Hydroxymethylglutaryl-CoA synthase.